A 616-amino-acid chain; its full sequence is Dihydroxy-acid dehydratase (616 aa).

Asp-81 lines the Mg(2+) pocket. Cys-122 serves as a coordination point for [2Fe-2S] cluster. Positions 123 and 124 each coordinate Mg(2+). An N6-carboxylysine modification is found at Lys-124. Cys-195 serves as a coordination point for [2Fe-2S] cluster. Glu-491 is a binding site for Mg(2+). Residue Ser-517 is the Proton acceptor of the active site.

Belongs to the IlvD/Edd family. As to quaternary structure, homodimer. [2Fe-2S] cluster is required as a cofactor. Mg(2+) serves as cofactor.

It carries out the reaction (2R)-2,3-dihydroxy-3-methylbutanoate = 3-methyl-2-oxobutanoate + H2O. The enzyme catalyses (2R,3R)-2,3-dihydroxy-3-methylpentanoate = (S)-3-methyl-2-oxopentanoate + H2O. The protein operates within amino-acid biosynthesis; L-isoleucine biosynthesis; L-isoleucine from 2-oxobutanoate: step 3/4. It participates in amino-acid biosynthesis; L-valine biosynthesis; L-valine from pyruvate: step 3/4. In terms of biological role, functions in the biosynthesis of branched-chain amino acids. Catalyzes the dehydration of (2R,3R)-2,3-dihydroxy-3-methylpentanoate (2,3-dihydroxy-3-methylvalerate) into 2-oxo-3-methylpentanoate (2-oxo-3-methylvalerate) and of (2R)-2,3-dihydroxy-3-methylbutanoate (2,3-dihydroxyisovalerate) into 2-oxo-3-methylbutanoate (2-oxoisovalerate), the penultimate precursor to L-isoleucine and L-valine, respectively. This is Dihydroxy-acid dehydratase from Erwinia tasmaniensis (strain DSM 17950 / CFBP 7177 / CIP 109463 / NCPPB 4357 / Et1/99).